Reading from the N-terminus, the 217-residue chain is Monomethylamine corrinoid protein 2 (217 aa).

Residues 1–91 (MTNTEIFEKL…ELEKSKVEGE (91 aa)) enclose the B12-binding N-terminal domain. The B12-binding domain maps to 93-217 (TGLAITFVAE…AAKVALNIMK (125 aa)). His-106 is a methylcob(III)alamin binding site.

Belongs to the methylamine corrinoid protein family. Can form a complex with MtmB.

Its pathway is one-carbon metabolism; methanogenesis from methylamine. Acts as a methyl group carrier between MtmB and MtbA. The chain is Monomethylamine corrinoid protein 2 (mtmC2) from Methanosarcina acetivorans (strain ATCC 35395 / DSM 2834 / JCM 12185 / C2A).